The primary structure comprises 535 residues: PAC-1 interacting and coiled-coil domain-containing protein 1 (535 aa).

The tract at residues 1 to 67 is disordered; sequence MIITTPRRAN…KQTPPRSPVI (67 aa). A compositionally biased stretch (low complexity) spans 36 to 57; that stretch reads SSTTPSSIGSSSSSSSSYASST. Coiled coils occupy residues 109-172 and 198-242; these read KLQY…RDLS and SLMK…RQSL. Disordered stretches follow at residues 254–277 and 503–535; these read NESEDLGCGSSEQSGGSEGHNDEE and TCRPTTTLISSTQPAQRSVSVEKNNNNNVHTHN. The segment covering 503 to 525 has biased composition (polar residues); sequence TCRPTTTLISSTQPAQRSVSVEK. Positions 526–535 are enriched in low complexity; sequence NNNNNVHTHN.

The protein belongs to the CCDC85 family. Interacts with pac-1 and jac-1.

The protein localises to the cell junction. It is found in the adherens junction. Linker protein which helps to recruit the Rho GTPase-activating protein, pac-1, to adherens junctions. This Caenorhabditis elegans protein is PAC-1 interacting and coiled-coil domain-containing protein 1.